The sequence spans 113 residues: Large ribosomal subunit protein uL22 (113 aa).

Belongs to the universal ribosomal protein uL22 family. Part of the 50S ribosomal subunit.

In terms of biological role, this protein binds specifically to 23S rRNA; its binding is stimulated by other ribosomal proteins, e.g. L4, L17, and L20. It is important during the early stages of 50S assembly. It makes multiple contacts with different domains of the 23S rRNA in the assembled 50S subunit and ribosome. Its function is as follows. The globular domain of the protein is located near the polypeptide exit tunnel on the outside of the subunit, while an extended beta-hairpin is found that lines the wall of the exit tunnel in the center of the 70S ribosome. This Magnetococcus marinus (strain ATCC BAA-1437 / JCM 17883 / MC-1) protein is Large ribosomal subunit protein uL22.